Consider the following 349-residue polypeptide: S-adenosylmethionine decarboxylase proenzyme 3 (349 aa).

Active-site residues include Glu9 and Glu12. Residue Glu68 participates in substrate binding. Ser69 serves as the catalytic Schiff-base intermediate with substrate; via pyruvic acid. A Pyruvic acid (Ser); by autocatalysis modification is found at Ser69. Cys83 acts as the Proton donor; for catalytic activity in catalysis. Catalysis depends on proton acceptor; for processing activity residues Ser235 and His248. A substrate-binding site is contributed by Glu252.

This sequence belongs to the eukaryotic AdoMetDC family. Pyruvate is required as a cofactor. Is synthesized initially as an inactive proenzyme. Formation of the active enzyme involves a self-maturation process in which the active site pyruvoyl group is generated from an internal serine residue via an autocatalytic post-translational modification. Two non-identical subunits are generated from the proenzyme in this reaction, and the pyruvate is formed at the N-terminus of the alpha chain, which is derived from the carboxyl end of the proenzyme. The post-translation cleavage follows an unusual pathway, termed non-hydrolytic serinolysis, in which the side chain hydroxyl group of the serine supplies its oxygen atom to form the C-terminus of the beta chain, while the remainder of the serine residue undergoes an oxidative deamination to produce ammonia and the pyruvoyl group blocking the N-terminus of the alpha chain.

The catalysed reaction is S-adenosyl-L-methionine + H(+) = S-adenosyl 3-(methylsulfanyl)propylamine + CO2. Its pathway is amine and polyamine biosynthesis; S-adenosylmethioninamine biosynthesis; S-adenosylmethioninamine from S-adenosyl-L-methionine: step 1/1. Functionally, essential for biosynthesis of the polyamines spermidine and spermine. Essential for polyamine homeostasis, and normal plant embryogenesis, growth and development. In Arabidopsis thaliana (Mouse-ear cress), this protein is S-adenosylmethionine decarboxylase proenzyme 3.